Here is a 301-residue protein sequence, read N- to C-terminus: D-alanine--D-alanine ligase (301 aa).

Positions 102–295 constitute an ATP-grasp domain; that stretch reads KAVFAAAGLP…FPALCAWMVE (194 aa). An ATP-binding site is contributed by 128-181; the sequence is PLPRPYVIKPVNEGSSVGVFILREGDNRRADIARAWRHGSVAMTEEYVPGRELT. Mg(2+) is bound by residues D248, E262, and N264.

Belongs to the D-alanine--D-alanine ligase family. It depends on Mg(2+) as a cofactor. The cofactor is Mn(2+).

It localises to the cytoplasm. The enzyme catalyses 2 D-alanine + ATP = D-alanyl-D-alanine + ADP + phosphate + H(+). Its pathway is cell wall biogenesis; peptidoglycan biosynthesis. Cell wall formation. The polypeptide is D-alanine--D-alanine ligase (Acidiphilium cryptum (strain JF-5)).